The primary structure comprises 274 residues: Protein RecA (274 aa).

ATP is bound at residue 43 to 50 (GPESSGKT).

Belongs to the RecA family.

It is found in the cytoplasm. Functionally, can catalyze the hydrolysis of ATP in the presence of single-stranded DNA, the ATP-dependent uptake of single-stranded DNA by duplex DNA, and the ATP-dependent hybridization of homologous single-stranded DNAs. It interacts with LexA causing its activation and leading to its autocatalytic cleavage. The protein is Protein RecA of Neisseria pharyngis.